The chain runs to 184 residues: Alpha-tubulin N-acetyltransferase (184 aa).

In terms of domain architecture, N-acetyltransferase spans 1–170; sequence METFNHIDIK…NHFVIFSNYF (170 aa). Residues 104–117 and 140–149 contribute to the acetyl-CoA site; these read FYILEKFQKRGLGI and SYKLQNFLKK.

Belongs to the acetyltransferase ATAT1 family.

It catalyses the reaction L-lysyl-[alpha-tubulin] + acetyl-CoA = N(6)-acetyl-L-lysyl-[alpha-tubulin] + CoA + H(+). In terms of biological role, specifically acetylates 'Lys-40' in alpha-tubulin on the lumenal side of microtubules. Promotes microtubule destabilization and accelerates microtubule dynamics; this activity may be independent of acetylation activity. Acetylates alpha-tubulin with a slow enzymatic rate, due to a catalytic site that is not optimized for acetyl transfer. Enters the microtubule through each end and diffuses quickly throughout the lumen of microtubules. Acetylates only long/old microtubules because of its slow acetylation rate since it does not have time to act on dynamically unstable microtubules before the enzyme is released. The chain is Alpha-tubulin N-acetyltransferase from Plasmodium falciparum (isolate 3D7).